The following is a 437-amino-acid chain: MTPSTDLNLPLFERAKALIPGGVNSPVRAFRAVGGTPRFVQRAQGAYFWDANGQRFIDYIGSWGPMILGHGHPAVLEAVQKAALDGFSFGAPTEREVELAEEILRHVPSMEMIRLVSSGTEAGMSAIRLARGATGRSRIIKFNGCYHGHADALLVKAGSGLATFGHATSAGVPAEVVQHTLVLEYNDIAQLEEAFALHGSEIAGLMIEPIAGNMNFVRASVPFMRRCRELCTQHGALLVFDEVMTGFRVALGSAQSVYARDIPGFQPDITVLGKVIGGGMPLAAFGGPRAIMEQLAPLGPVYQAGTLSGNPVATACGLATLREIARPGFYEALGERTRALTGGLADAARAEGLPFSADSEGGMFGFFLLPELPRNYPTVMTTDGARFNALFHGLLDRGVYIAPALYEAGFVSSAHSAQDIDETIAAAREVFRLVSAG.

Lys274 carries the post-translational modification N6-(pyridoxal phosphate)lysine.

It belongs to the class-III pyridoxal-phosphate-dependent aminotransferase family. HemL subfamily. Homodimer. Pyridoxal 5'-phosphate serves as cofactor.

The protein resides in the cytoplasm. It catalyses the reaction (S)-4-amino-5-oxopentanoate = 5-aminolevulinate. The protein operates within porphyrin-containing compound metabolism; protoporphyrin-IX biosynthesis; 5-aminolevulinate from L-glutamyl-tRNA(Glu): step 2/2. This chain is Glutamate-1-semialdehyde 2,1-aminomutase, found in Paracidovorax citrulli (strain AAC00-1) (Acidovorax citrulli).